A 381-amino-acid chain; its full sequence is Queuine tRNA-ribosyltransferase (381 aa).

Catalysis depends on aspartate 89, which acts as the Proton acceptor. Residues 89–93 (DSGGF), aspartate 143, glutamine 187, and glycine 214 contribute to the substrate site. The tract at residues 245–251 (GVGKPED) is RNA binding. The active-site Nucleophile is the aspartate 264. The tract at residues 269 to 273 (TRNAR) is RNA binding; important for wobble base 34 recognition. Zn(2+) is bound by residues cysteine 302, cysteine 304, cysteine 307, and histidine 333.

Belongs to the queuine tRNA-ribosyltransferase family. As to quaternary structure, homodimer. Within each dimer, one monomer is responsible for RNA recognition and catalysis, while the other monomer binds to the replacement base PreQ1. The cofactor is Zn(2+).

The enzyme catalyses 7-aminomethyl-7-carbaguanine + guanosine(34) in tRNA = 7-aminomethyl-7-carbaguanosine(34) in tRNA + guanine. It functions in the pathway tRNA modification; tRNA-queuosine biosynthesis. Catalyzes the base-exchange of a guanine (G) residue with the queuine precursor 7-aminomethyl-7-deazaguanine (PreQ1) at position 34 (anticodon wobble position) in tRNAs with GU(N) anticodons (tRNA-Asp, -Asn, -His and -Tyr). Catalysis occurs through a double-displacement mechanism. The nucleophile active site attacks the C1' of nucleotide 34 to detach the guanine base from the RNA, forming a covalent enzyme-RNA intermediate. The proton acceptor active site deprotonates the incoming PreQ1, allowing a nucleophilic attack on the C1' of the ribose to form the product. After dissociation, two additional enzymatic reactions on the tRNA convert PreQ1 to queuine (Q), resulting in the hypermodified nucleoside queuosine (7-(((4,5-cis-dihydroxy-2-cyclopenten-1-yl)amino)methyl)-7-deazaguanosine). The polypeptide is Queuine tRNA-ribosyltransferase (Pectobacterium atrosepticum (strain SCRI 1043 / ATCC BAA-672) (Erwinia carotovora subsp. atroseptica)).